We begin with the raw amino-acid sequence, 149 residues long: Protegrin-4 (149 aa).

A signal peptide spans 1–29 (METQRASLCLGRWSLWLLLLALVVPSASA). A propeptide spanning residues 30 to 130 (QALSYREAVL…DITCNEVQGV (101 aa)) is cleaved from the precursor. Residues 61 to 80 (DQPPKADEDPGTPKPVSFTV) are disordered. Intrachain disulfides connect Cys-85–Cys-96, Cys-107–Cys-124, Cys-136–Cys-145, and Cys-138–Cys-143. An Arginine amide modification is found at Arg-148.

It belongs to the cathelicidin family.

It localises to the secreted. In terms of biological role, microbicidal activity. The sequence is that of Protegrin-4 (NPG4) from Sus scrofa (Pig).